Reading from the N-terminus, the 258-residue chain is Thiazole synthase (258 aa).

Lysine 100 serves as the catalytic Schiff-base intermediate with DXP. 1-deoxy-D-xylulose 5-phosphate contacts are provided by residues glycine 161, 187–188 (AG), and 209–210 (NS).

This sequence belongs to the ThiG family. In terms of assembly, homotetramer. Forms heterodimers with either ThiH or ThiS.

Its subcellular location is the plastid. It is found in the chloroplast. It catalyses the reaction [ThiS sulfur-carrier protein]-C-terminal-Gly-aminoethanethioate + 2-iminoacetate + 1-deoxy-D-xylulose 5-phosphate = [ThiS sulfur-carrier protein]-C-terminal Gly-Gly + 2-[(2R,5Z)-2-carboxy-4-methylthiazol-5(2H)-ylidene]ethyl phosphate + 2 H2O + H(+). It participates in cofactor biosynthesis; thiamine diphosphate biosynthesis. Catalyzes the rearrangement of 1-deoxy-D-xylulose 5-phosphate (DXP) to produce the thiazole phosphate moiety of thiamine. Sulfur is provided by the thiocarboxylate moiety of the carrier protein ThiS. In vitro, sulfur can be provided by H(2)S. The protein is Thiazole synthase of Cyanidioschyzon merolae (strain NIES-3377 / 10D) (Unicellular red alga).